Consider the following 375-residue polypeptide: MSTAGKVIKCKAAVLWELHKPFTIEDIEVAPPKAHEVRIKMVATGVCRSDDHVVSGTLVTPLPAVLGHEGAGIVESVGEGVTCVKPGDKVIPLFSPQCGECRICKHPESNFCSRSDLLMPRGTLREGTSRFSCKGKQIHNFISTSTFSQYTVVDDIAVAKIDGASPLDKVCLIGCGFSTGYGSAVKVAKVTPGSTCAVFGLGGVGLSVIIGCKAAGAARIIAVDINKDKFAKAKELGATECINPQDYSKPIQEVLQEMTDGGVDFSFEVIGRLDTMTSALLSCHAACGVSVVVGVPPNAQNLSMNPMLLLLGRTWKGAIFGGFKSKDSVPKLVADFMAKKFPLDPLITHVLPFEKINEAFDLLRSGKSIRTVLTF.

Ser2 carries the post-translational modification N-acetylserine. Cys47, His68, Cys98, Cys101, Cys104, Cys112, and Cys175 together coordinate Zn(2+). NAD(+)-binding positions include 200-205 (GLGGVG), Asp224, and Lys229. Lys234 is subject to N6-succinyllysine. 293–295 (VGV) serves as a coordination point for NAD(+). N6-succinyllysine is present on Lys340. Residue Arg370 participates in NAD(+) binding.

Belongs to the zinc-containing alcohol dehydrogenase family. Class-I subfamily. Dimer of identical or non-identical chains of three types (A, B, C), which are coded by 3 separate genes at different loci. Zn(2+) is required as a cofactor. As to expression, expressed at high levels in the liver, small intestine and eye, at moderate levels in kidney, ovary and uterus, and at low levels in the spinal cord, thymus, heart, stomach mucosa, skin and testis.

The protein resides in the cytoplasm. It catalyses the reaction a primary alcohol + NAD(+) = an aldehyde + NADH + H(+). The catalysed reaction is a secondary alcohol + NAD(+) = a ketone + NADH + H(+). This is Alcohol dehydrogenase 1 (Adh1) from Mus musculus (Mouse).